We begin with the raw amino-acid sequence, 441 residues long: MSEMTPREIVHELDSHIIGQQKAKRSVAIALRNRWRRMQLAADLRQEVTPKNILMIGPTGVGKTEIARRLARLAKAPFIKVEATKFTEVGYVGKEVEQIIRDLTDSAIKLTREEQIKKCKFRAEEAAEERILDALLPKPKEDWDSEKSDGSATRQIFRKKLREGQLDDKEIEIDVSAPQAGIEIMSPPGMEEMTNQLQSMFQNMGPGASKRRKMPIKEAYKLLIEEEASKLINQEDLKEQAIELVEQHGIVFLDEIDKICKRGESSGPDVSREGVQRDLLPLVEGCTVNTKHGMVKTDHILFIASGAFQMSKPSDLIPELQGRLPIRVELDALSAGDFKRILTEPHASLTEQYIALMGTEGVTIEFTEDGIDSIAEAAWQVNERTENIGARRLHTVMERLMEELSFEASDKSGSVTVIDAAYVKASLDNLVQDEDLSRYIL.

ATP is bound by residues I18, 60–65 (GVGKTE), D254, E319, and R391.

This sequence belongs to the ClpX chaperone family. HslU subfamily. In terms of assembly, a double ring-shaped homohexamer of HslV is capped on each side by a ring-shaped HslU homohexamer. The assembly of the HslU/HslV complex is dependent on binding of ATP.

The protein resides in the cytoplasm. Functionally, ATPase subunit of a proteasome-like degradation complex; this subunit has chaperone activity. The binding of ATP and its subsequent hydrolysis by HslU are essential for unfolding of protein substrates subsequently hydrolyzed by HslV. HslU recognizes the N-terminal part of its protein substrates and unfolds these before they are guided to HslV for hydrolysis. The chain is ATP-dependent protease ATPase subunit HslU from Shewanella halifaxensis (strain HAW-EB4).